Reading from the N-terminus, the 261-residue chain is U11/U12 small nuclear ribonucleoprotein 31 kDa protein (261 aa).

The interval 18 to 51 is disordered; it reads YYRYSSVAAPPPSNPKHQPSSSAKSSAPGGGSGG. One can recognise an RRM domain in the interval 57-135; it reads STLYVSNLDF…RKLTVSIAAD (79 aa). Residues 153–169 form a CCHC-type zinc finger; sequence RCYECGDEGHLSYECPK. The tract at residues 165 to 261 is disordered; it reads YECPKNQLGP…YFSDESDDED (97 aa). Residues 226–235 show a composition bias toward basic and acidic residues; that stretch reads AGERLRKREA.

As to quaternary structure, component of the U11/U12 snRNPs that are part of the U12-type spliceosome. Ubiquitous. Abundantly expressed in the shoot apical neristem.

It localises to the nucleus. Its function is as follows. RNA chaperone required for proper U12 intron splicing and for normal growth and development of plants. Mainly responsible for meristem activity. Plays a role in regulating cell division. The protein is U11/U12 small nuclear ribonucleoprotein 31 kDa protein (SNRNP31) of Arabidopsis thaliana (Mouse-ear cress).